The following is a 205-amino-acid chain: Nascent polypeptide-associated complex subunit alpha-like protein (205 aa).

Disordered regions lie at residues 1–73 (MPSV…RKAM) and 137–166 (KAPN…DTGV). The segment covering 20-29 (EQQELEHSDE) has biased composition (basic and acidic residues). Residues 30–51 (PILEDDEDDDDEEDDNDEDDAQ) show a composition bias toward acidic residues. Positions 56–66 (GEGKSKQSRSE) are enriched in basic and acidic residues. The NAC-A/B domain maps to 63–128 (SRSEKKCRKA…AKIEDLSSQL (66 aa)). Positions 155–165 (QEDEDEVDDTG) are enriched in acidic residues. The 38-residue stretch at 166–203 (VEPKDIELVMTQAGVSRTKAVKALKAADGDIVSAIMDL) folds into the UBA domain.

The protein belongs to the NAC-alpha family.

Functionally, may promote appropriate targeting of ribosome-nascent polypeptide complexes. The chain is Nascent polypeptide-associated complex subunit alpha-like protein from Pinus taeda (Loblolly pine).